A 194-amino-acid chain; its full sequence is Probable nicotinate-nucleotide adenylyltransferase (194 aa).

This sequence belongs to the NadD family.

It carries out the reaction nicotinate beta-D-ribonucleotide + ATP + H(+) = deamido-NAD(+) + diphosphate. It functions in the pathway cofactor biosynthesis; NAD(+) biosynthesis; deamido-NAD(+) from nicotinate D-ribonucleotide: step 1/1. In terms of biological role, catalyzes the reversible adenylation of nicotinate mononucleotide (NaMN) to nicotinic acid adenine dinucleotide (NaAD). The protein is Probable nicotinate-nucleotide adenylyltransferase of Christiangramia forsetii (strain DSM 17595 / CGMCC 1.15422 / KT0803) (Gramella forsetii).